Reading from the N-terminus, the 71-residue chain is MGAAKVLLVVLAVMVAVPNLAEGRSPPQCQYTNCAAVLCPAVYCANAYTPPCGCCDICPPQKYGGGYRPRG.

Residues 1 to 23 (MGAAKVLLVVLAVMVAVPNLAEG) form the signal peptide. Cystine bridges form between C29/C58, C34/C54, C39/C52, and C44/C55. Residue R70 is modified to Arginine amide; partial.

Belongs to the paralithocin family. The amidated form is probably the active form.

In terms of biological role, has antibacterial activity, mainly against marine Gram-positive bacteria like C.maltaromaticum (MIC=50 uM), C.mobile (MIC=50 uM), C.divergens (MIC=50 uM) and C.funditum (MIC=25 uM) but also against C.glutamicum (MIC=12.5 uM). Has very little or no activity against Gram-negative bacteria. This chain is Paralithocin 2, found in Paralithodes camtschaticus (Red king crab).